A 600-amino-acid polypeptide reads, in one-letter code: FERM domain-containing protein 3 (600 aa).

The 281-residue stretch at 31-311 (MRCTIRLLDD…ENQAFYKYAK (281 aa)) folds into the FERM domain. The interval 413–440 (SAPVLGNSPARGLETTADVTHDEEESIR) is disordered. The helical transmembrane segment at 534–554 (LLLAAIGLLMVVLPLLLILLE) threads the bilayer.

It localises to the membrane. In Xenopus tropicalis (Western clawed frog), this protein is FERM domain-containing protein 3 (frmd3).